The sequence spans 307 residues: N-acetylmuramic acid 6-phosphate etherase (307 aa).

One can recognise an SIS domain in the interval 60–223 (AAQAIARGGR…STGAMVRIGK (164 aa)). The Proton donor role is filled by Glu88. Residue Glu119 is part of the active site.

The protein belongs to the GCKR-like family. MurNAc-6-P etherase subfamily. Homodimer.

The enzyme catalyses N-acetyl-D-muramate 6-phosphate + H2O = N-acetyl-D-glucosamine 6-phosphate + (R)-lactate. Its pathway is amino-sugar metabolism; N-acetylmuramate degradation. Functionally, specifically catalyzes the cleavage of the D-lactyl ether substituent of MurNAc 6-phosphate, producing GlcNAc 6-phosphate and D-lactate. The protein is N-acetylmuramic acid 6-phosphate etherase of Synechococcus elongatus (strain ATCC 33912 / PCC 7942 / FACHB-805) (Anacystis nidulans R2).